The following is a 204-amino-acid chain: N-(5'-phosphoribosyl)anthranilate isomerase (204 aa).

This sequence belongs to the TrpF family.

The enzyme catalyses N-(5-phospho-beta-D-ribosyl)anthranilate = 1-(2-carboxyphenylamino)-1-deoxy-D-ribulose 5-phosphate. The protein operates within amino-acid biosynthesis; L-tryptophan biosynthesis; L-tryptophan from chorismate: step 3/5. The sequence is that of N-(5'-phosphoribosyl)anthranilate isomerase from Desulforudis audaxviator (strain MP104C).